The sequence spans 543 residues: CTP synthase (543 aa).

The tract at residues 1-265 is amidoligase domain; it reads MTRFVFITGG…DQEVLRYFDL (265 aa). S13 is a binding site for CTP. S13 contacts UTP. An ATP-binding site is contributed by 14-19; the sequence is SLGKGI. Y54 contacts L-glutamine. D71 is an ATP binding site. 2 residues coordinate Mg(2+): D71 and E139. Residues 146–148, 186–191, and K222 each bind CTP; these read DIE and KTKPTQ. UTP contacts are provided by residues 186-191 and K222; that span reads KTKPTQ. The Glutamine amidotransferase type-1 domain maps to 291–542; it reads RVAIVGKYTA…IAAAVKEAHR (252 aa). G354 contacts L-glutamine. The active-site Nucleophile; for glutamine hydrolysis is the C381. Residues 382–385, E405, and R470 contribute to the L-glutamine site; that span reads FGMQ. Residues H515 and E517 contribute to the active site.

It belongs to the CTP synthase family. As to quaternary structure, homotetramer.

The catalysed reaction is UTP + L-glutamine + ATP + H2O = CTP + L-glutamate + ADP + phosphate + 2 H(+). It carries out the reaction L-glutamine + H2O = L-glutamate + NH4(+). The enzyme catalyses UTP + NH4(+) + ATP = CTP + ADP + phosphate + 2 H(+). Its pathway is pyrimidine metabolism; CTP biosynthesis via de novo pathway; CTP from UDP: step 2/2. Allosterically activated by GTP, when glutamine is the substrate; GTP has no effect on the reaction when ammonia is the substrate. The allosteric effector GTP functions by stabilizing the protein conformation that binds the tetrahedral intermediate(s) formed during glutamine hydrolysis. Inhibited by the product CTP, via allosteric rather than competitive inhibition. In terms of biological role, catalyzes the ATP-dependent amination of UTP to CTP with either L-glutamine or ammonia as the source of nitrogen. Regulates intracellular CTP levels through interactions with the four ribonucleotide triphosphates. The sequence is that of CTP synthase from Gluconobacter oxydans (strain 621H) (Gluconobacter suboxydans).